Consider the following 169-residue polypeptide: Tumor suppressor ARF (169 aa).

The interval 1-63 (MGRRFLVTVR…RRGPHRNPGP (63 aa)) is interaction with CDK5RAP3 and MDM2. The disordered stretch occupies residues 54–73 (RRGPHRNPGPGDDDGQRSRS).

As to quaternary structure, does not interact with cyclins, CDK1, CDK2, CDK4, CDK5 or CDK6. Interacts with COMMD1. Binds to BCL6, E2F1, HUWE1, MDM2, MYC, NPM1/B23, TOP1/TOPOI and UBE2I/UBC9. Interacts with TBRG1. Interacts with CDKN2AIP and E4F1. Interacts with CDK5RAP3 and MDM2; form a ternary complex involved in regulation of p53/TP53. Interacts with NOP53; the interaction is direct and promotes ARF nucleoplasmic relocalization and ubiquitin-mediated proteasomal degradation. Interacts with TTF1 (via the N-terminal region (NRD) and a C-terminal region); the interaction is direct and inhibits the nucleolar localization of TTF1. In terms of assembly, interacts with C1QBP. Post-translationally, ubiquitinated in normal cells by TRIP12 via the ubiquitin fusion degradation (UFD) pathway, a process that mediates ubiquitination at the N-terminus, regardless of the absence of lysine residues. Ubiquitination leads to its proteasomal degradation. In cancer cells, however, TRIP12 is located in a different cell compartment, preventing ubiquitination and degradation.

Its subcellular location is the nucleus. The protein resides in the nucleolus. The protein localises to the nucleoplasm. It localises to the mitochondrion. Functionally, capable of inducing cell cycle arrest in G1 and G2 phases. Acts as a tumor suppressor. Binds to MDM2 and blocks its nucleocytoplasmic shuttling by sequestering it in the nucleolus. This inhibits the oncogenic action of MDM2 by blocking MDM2-induced degradation of p53 and enhancing p53-dependent transactivation and apoptosis. Also induces G2 arrest and apoptosis in a p53-independent manner by preventing the activation of cyclin B1/CDC2 complexes. Binds to BCL6 and down-regulates BCL6-induced transcriptional repression. Binds to E2F1 and MYC and blocks their transcriptional activator activity but has no effect on MYC transcriptional repression. Binds to TOP1/TOPOI and stimulates its activity. This complex binds to rRNA gene promoters and may play a role in rRNA transcription and/or maturation. Interacts with NPM1/B23 and promotes its polyubiquitination and degradation, thus inhibiting rRNA processing. Plays a role in inhibiting ribosome biogenesis, perhaps by binding to the nucleolar localization sequence of transcription termination factor TTF1, and thereby preventing nucleolar localization of TTF1. Interacts with COMMD1 and promotes its 'Lys63'-linked polyubiquitination. Interacts with UBE2I/UBC9 and enhances sumoylation of a number of its binding partners including MDM2 and E2F1. Binds to HUWE1 and represses its ubiquitin ligase activity. May play a role in controlling cell proliferation and apoptosis during mammary gland development. In terms of biological role, may be involved in regulation of autophagy and caspase-independent cell death; the short-lived mitochondrial isoform is stabilized by C1QBP. The polypeptide is Tumor suppressor ARF (Mus musculus (Mouse)).